The following is a 99-amino-acid chain: ATP-dependent Clp protease adapter protein ClpS (99 aa).

The protein belongs to the ClpS family. In terms of assembly, binds to the N-terminal domain of the chaperone ClpA.

In terms of biological role, involved in the modulation of the specificity of the ClpAP-mediated ATP-dependent protein degradation. This chain is ATP-dependent Clp protease adapter protein ClpS, found in Acetivibrio thermocellus (strain ATCC 27405 / DSM 1237 / JCM 9322 / NBRC 103400 / NCIMB 10682 / NRRL B-4536 / VPI 7372) (Clostridium thermocellum).